A 92-amino-acid chain; its full sequence is MWPVLWTVVRTYAPYVTFPVAFVVGAVGYHLEWFIRGKEPQPVEEEKSISERREDRKLDELLGKDHTQVVSLKDKLEFAPKAVLNRNRPEKN.

The chain crosses the membrane as a helical span at residues 12–34; it reads YAPYVTFPVAFVVGAVGYHLEWF.

The protein belongs to the SMIM12 family.

It localises to the membrane. The protein is Small integral membrane protein 12 (SMIM12) of Bos taurus (Bovine).